Here is a 321-residue protein sequence, read N- to C-terminus: Ubiquinone biosynthesis protein COQ4, mitochondrial (321 aa).

Positions 205, 206, 209, and 221 each coordinate Zn(2+).

Belongs to the COQ4 family. Component of a multi-subunit COQ enzyme complex, composed of at least COQ3, COQ4, COQ5, COQ6, COQ7 and COQ9. Zn(2+) serves as cofactor.

It is found in the mitochondrion inner membrane. It carries out the reaction a 4-hydroxy-3-methoxy-5-(all-trans-polyprenyl)benzoate + H(+) = a 2-methoxy-6-(all-trans-polyprenyl)phenol + CO2. Its pathway is cofactor biosynthesis; ubiquinone biosynthesis. Lyase that catalyzes the C1-decarboxylation of 4-hydroxy-3-methoxy-5-(all-trans-polyprenyl)benzoic acid into 2-methoxy-6-(all-trans-polyprenyl)phenol during ubiquinone biosynthesis. This is Ubiquinone biosynthesis protein COQ4, mitochondrial from Candida tropicalis (strain ATCC MYA-3404 / T1) (Yeast).